The primary structure comprises 348 residues: Dehydrogenase orsE (348 aa).

Position 43–46 (L43–H46) interacts with NADP(+). F130–C137 is a binding site for substrate. NADP(+)-binding positions include S180–V183, G203–N206, and V272–H273. Substrate is bound at residue N292–T296. V339–S340 is a binding site for NADP(+).

The protein belongs to the zinc-containing alcohol dehydrogenase family. Monomer.

Functionally, dehydrogenase; part of the gene cluster that mediates the biosynthesis of orsellinic acid, as well as of the cathepsin K inhibitors F9775 A and F9775 B. The non-reducing polyketide synthase orsA produces orsellinic acid by condensing acetyl-CoA with 3 malonyl-CoA units. Further modifications by the decarboxylase orsB and the tyrosinase-like protein orsC lead to the production of F9775 A and F9775 B. The functions of orsD and orsE remain unclear since only orsB and orsC are required to convert orsellinic acid into F9775 A and F9775 B. In Emericella nidulans (strain FGSC A4 / ATCC 38163 / CBS 112.46 / NRRL 194 / M139) (Aspergillus nidulans), this protein is Dehydrogenase orsE.